We begin with the raw amino-acid sequence, 471 residues long: 3-isopropylmalate dehydratase large subunit (471 aa).

[4Fe-4S] cluster is bound by residues Cys-347, Cys-409, and Cys-412.

It belongs to the aconitase/IPM isomerase family. LeuC type 1 subfamily. As to quaternary structure, heterodimer of LeuC and LeuD. [4Fe-4S] cluster is required as a cofactor.

The enzyme catalyses (2R,3S)-3-isopropylmalate = (2S)-2-isopropylmalate. It participates in amino-acid biosynthesis; L-leucine biosynthesis; L-leucine from 3-methyl-2-oxobutanoate: step 2/4. Functionally, catalyzes the isomerization between 2-isopropylmalate and 3-isopropylmalate, via the formation of 2-isopropylmaleate. This chain is 3-isopropylmalate dehydratase large subunit, found in Buchnera aphidicola subsp. Rhopalosiphum padi.